The primary structure comprises 614 residues: Vitamin B12 transporter BtuB (614 aa).

Residues 1 to 20 (MIKKASLLTACSVTAFSAWA) form the signal peptide. Residues 26–33 (DTLVVTAN) carry the TonB box motif. A TBDR plug domain is found at 38-152 (PRSTVLAPTT…IGGVVNIITT (115 aa)). Residues L83, S85, N92, and 110–111 (VS) contribute to the cyanocob(III)alamin site. A TBDR beta-barrel domain is found at 155–614 (HPGTEISAGW…EYTLSGSYTF (460 aa)). 3 consecutive transmembrane segments (beta stranded) span residues 158–165 (TEISAGWG), 169–178 (YQNYDVSTQQ), and 184–195 (TRVTLLGDYAHT). The Ca(2+) site is built by D199, Q211, D213, and D215. The next 2 membrane-spanning stretches (beta stranded) occupy residues 217–227 (FLSKTLYGALE) and 232–248 (DVWS…NRTN). Residues Y249 and D250 each coordinate Ca(2+). A251 contributes to the cyanocob(III)alamin binding site. D261 contributes to the Ca(2+) binding site. 14 beta stranded membrane passes run 263–277 (RKLY…LRYN), 279–296 (ELIK…KDYN), 309–325 (TLDE…NNII), 328–337 (HGNIGAGVDW), 353–369 (YDQR…QQVG), 371–381 (FTFEGAGRSDD), 385–400 (FGRH…WEFI), 403–417 (YRFI…KAPN), 434–443 (KSKQWEGAFE), 449–458 (VNWRISGYRN), 473–490 (YYNE…TANF), 494–509 (PLTH…ARNA), 517–529 (RRAK…QLDW), and 535–550 (DWGI…YDKD). Cyanocob(III)alamin is bound at residue T309. R517 contacts cyanocob(III)alamin. Y551 contacts cyanocob(III)alamin. 3 consecutive transmembrane segments (beta stranded) span residues 558–572 (TVKM…LAVA), 585–596 (IANLFDKDYETV), and 602–614 (AGRE…SYTF). Residues 597–614 (YGYQTAGREYTLSGSYTF) carry the TonB C-terminal box motif.

It belongs to the TonB-dependent receptor family. BtuB (TC 1.B.14.3.1) subfamily.

It is found in the cell outer membrane. Involved in the active translocation of vitamin B12 (cyanocobalamin) across the outer membrane to the periplasmic space. It derives its energy for transport by interacting with the trans-periplasmic membrane protein TonB. In Escherichia coli O6:K15:H31 (strain 536 / UPEC), this protein is Vitamin B12 transporter BtuB.